The chain runs to 111 residues: MGPSSCLLLILIPLLQLINPGSTQCSLDSVMDKKIKDVLNSLEYSPSPISKKLSCASVKSQGRPSSCPAGMAVTGCACGYGCGSWDVQLETTCHCQCSVVDWTTARCCHLT.

The first 23 residues, 1-23 (MGPSSCLLLILIPLLQLINPGST), serve as a signal peptide directing secretion. 5 disulfides stabilise this stretch: C55-C108, C67-C107, C76-C93, C78-C95, and C82-C97.

This sequence belongs to the resistin/FIZZ family. As to quaternary structure, homodimer; disulfide-linked. As to expression, expressed only in the gastrointestinal tract, particularly the colon.

It localises to the secreted. Functionally, probable hormone. This chain is Resistin-like beta (RETNLB), found in Homo sapiens (Human).